The following is a 90-amino-acid chain: U7-theraphotoxin-Hhn1a 6 (90 aa).

The N-terminal stretch at 1–19 is a signal peptide; sequence MKTAIFTVVLALAVFAVLS. A propeptide spanning residues 20–50 is cleaved from the precursor; it reads FGWEANEKALSEEFTELIHEKEAASEAEARE. Intrachain disulfides connect Cys51–Cys65, Cys58–Cys70, and Cys64–Cys81.

Belongs to the neurotoxin 10 (Hwtx-1) family. 13 (Hntx-13) subfamily. Expressed by the venom gland.

The protein resides in the secreted. Functionally, ion channel inhibitor. This Cyriopagopus hainanus (Chinese bird spider) protein is U7-theraphotoxin-Hhn1a 6.